The primary structure comprises 569 residues: Dihydroxy-acid dehydratase (569 aa).

C61 serves as a coordination point for [2Fe-2S] cluster. Residue D93 participates in Mg(2+) binding. C134 serves as a coordination point for [2Fe-2S] cluster. D135 and K136 together coordinate Mg(2+). K136 carries the post-translational modification N6-carboxylysine. C211 is a [2Fe-2S] cluster binding site. E462 serves as a coordination point for Mg(2+). S488 (proton acceptor) is an active-site residue.

The protein belongs to the IlvD/Edd family. Homodimer. [2Fe-2S] cluster is required as a cofactor. Mg(2+) serves as cofactor.

It catalyses the reaction (2R)-2,3-dihydroxy-3-methylbutanoate = 3-methyl-2-oxobutanoate + H2O. The enzyme catalyses (2R,3R)-2,3-dihydroxy-3-methylpentanoate = (S)-3-methyl-2-oxopentanoate + H2O. Its pathway is amino-acid biosynthesis; L-isoleucine biosynthesis; L-isoleucine from 2-oxobutanoate: step 3/4. It participates in amino-acid biosynthesis; L-valine biosynthesis; L-valine from pyruvate: step 3/4. Functions in the biosynthesis of branched-chain amino acids. Catalyzes the dehydration of (2R,3R)-2,3-dihydroxy-3-methylpentanoate (2,3-dihydroxy-3-methylvalerate) into 2-oxo-3-methylpentanoate (2-oxo-3-methylvalerate) and of (2R)-2,3-dihydroxy-3-methylbutanoate (2,3-dihydroxyisovalerate) into 2-oxo-3-methylbutanoate (2-oxoisovalerate), the penultimate precursor to L-isoleucine and L-valine, respectively. In Tropheryma whipplei (strain Twist) (Whipple's bacillus), this protein is Dihydroxy-acid dehydratase.